A 657-amino-acid polypeptide reads, in one-letter code: Probable potassium transport system protein Kup (657 aa).

12 helical membrane-spanning segments follow: residues 14 to 34 (IGGL…SPLY), 47 to 67 (ADIV…QTTI), 96 to 116 (IQWL…DGII), 140 to 160 (TIVY…QFGT), 166 to 186 (FFAP…FIQI), 201 to 221 (AYHL…VFLC), 242 to 262 (ISWI…AAYL), 283 to 303 (LIMP…AAVI), 340 to 360 (LYIP…VLHF), 371 to 391 (GLAI…YLIM), 396 to 416 (LYFM…FLIA), and 425 to 445 (GYVT…WYLA).

Belongs to the HAK/KUP transporter (TC 2.A.72) family.

The protein resides in the cell inner membrane. The catalysed reaction is K(+)(in) + H(+)(in) = K(+)(out) + H(+)(out). Functionally, transport of potassium into the cell. Likely operates as a K(+):H(+) symporter. This chain is Probable potassium transport system protein Kup, found in Flavobacterium johnsoniae (strain ATCC 17061 / DSM 2064 / JCM 8514 / BCRC 14874 / CCUG 350202 / NBRC 14942 / NCIMB 11054 / UW101) (Cytophaga johnsonae).